Here is a 532-residue protein sequence, read N- to C-terminus: Protein DETOXIFICATION 48 (532 aa).

The next 12 helical transmembrane spans lie at 65–85 (ISGP…ISML), 95–115 (LAGG…VISG), 136–156 (LGLT…PISF), 174–194 (ISSV…LLSL), 211–231 (VTYS…LLVV), 235–255 (MGVA…VVLL), 279–301 (GWSA…WWWY), 322–342 (GILI…SLGV), 363–383 (IISL…AVLV), 397–417 (ILQL…GNCP), 437–457 (INLG…GFVF), and 464–484 (LWFG…CALL). The interval 496–532 (EELTSQTPGKSPPLLPIASSKSRSTSGTEDMMRTMLV) is disordered. Residues 514–523 (SSKSRSTSGT) show a composition bias toward polar residues.

Belongs to the multi antimicrobial extrusion (MATE) (TC 2.A.66.1) family. Highly expressed in shoot apices relative to leaves. At vegetative stages, highly expressed at the stipules. At reproductive stages, most highly expressed in the mature pollen. Also expressed in the tips of sepals.

The protein resides in the golgi apparatus membrane. It is found in the late endosome membrane. In terms of biological role, functions as a multidrug and toxin extrusion transporter. Contributes to iron homeostasis during stress responses and senescence. Could be involved in specifying the lateral organ initiation rate. May act as a negative regulator of hypocotyl cell elongation in the light. The polypeptide is Protein DETOXIFICATION 48 (Arabidopsis thaliana (Mouse-ear cress)).